We begin with the raw amino-acid sequence, 545 residues long: MAIIAVAELVEEVSMSRVEHVLNYLKRRQLENPGFLYAIEDDCGNVFWADPTCRLNYTYFGDTLVFDTTYRRGKRYQVPFAAFTGFNHHGQPVLFGCALILNESESSFAWLFQTWLQAMSAPPPPSITVEPDRLIQVAVSRVFSQTRLRFSQPLIFEETEEKLAHVFQAHPTFESEFINCVTETETAAEFEASWDSIVRRYYMEDNDWLQSIYNARQQWVRVFIRDTFYGELSTNEGSSILNSFFQGFVDASTTMQMLIKQYEKAIDSWREKELKADYEATNSTPVMKTPSPMEKQAASLYTRAAFIKFQEEFVETLAIPANIISDSGTHTTYRVAKFGEVHKGHTVSFDSLEVKANCSCQMFEYSGIICRHILAVFSAKNVLALPSRYLLRRWTKEAKIRGTEEQPEFSNGCQESLNLCFNSLRQEATKYVEEGAKSIQIYKVAMDALDEAAKKVAAASNRTPGTRLPNGEAYPSEEARETANATNHPGGEKERTILELTAELERTGQRCEVYRANLLSILRDMEEQKFQLSLKVQNARLSLKE.

The region spanning L22–V65 is the FAR1 domain. The MULE domain maps to F66–F150. The segment at H345 to N381 adopts an SWIM-type zinc-finger fold. Residues S460–R495 form a disordered region. Residues E492–E545 are a coiled coil.

Belongs to the FHY3/FAR1 family. Expressed in hypocotyls, rosette and cauline leaves, inflorescences stems, flowers and siliques.

The protein resides in the nucleus. Putative transcription activator involved in regulating light control of development. May act as a negative regulator specific to phyB signaling. This chain is Protein FAR1-RELATED SEQUENCE 9 (FRS9), found in Arabidopsis thaliana (Mouse-ear cress).